The following is a 230-amino-acid chain: 6-carboxyhexanoate--CoA ligase (230 aa).

It belongs to the BioW family. Homodimer. Requires Mg(2+) as cofactor.

The enzyme catalyses heptanedioate + ATP + CoA = 6-carboxyhexanoyl-CoA + AMP + diphosphate. Its pathway is metabolic intermediate metabolism; pimeloyl-CoA biosynthesis; pimeloyl-CoA from pimelate: step 1/1. Its function is as follows. Catalyzes the transformation of pimelate into pimeloyl-CoA with concomitant hydrolysis of ATP to AMP. The polypeptide is 6-carboxyhexanoate--CoA ligase (Staphylococcus aureus (strain MSSA476)).